The sequence spans 547 residues: Chaperonin GroEL (547 aa).

ATP is bound by residues 30–33 (TLGP), lysine 51, 87–91 (DGTTT), glycine 415, 479–481 (NAA), and aspartate 495.

It belongs to the chaperonin (HSP60) family. As to quaternary structure, forms a cylinder of 14 subunits composed of two heptameric rings stacked back-to-back. Interacts with the co-chaperonin GroES.

Its subcellular location is the cytoplasm. The catalysed reaction is ATP + H2O + a folded polypeptide = ADP + phosphate + an unfolded polypeptide.. Its function is as follows. Together with its co-chaperonin GroES, plays an essential role in assisting protein folding. The GroEL-GroES system forms a nano-cage that allows encapsulation of the non-native substrate proteins and provides a physical environment optimized to promote and accelerate protein folding. This Bordetella pertussis (strain Tohama I / ATCC BAA-589 / NCTC 13251) protein is Chaperonin GroEL.